Reading from the N-terminus, the 198-residue chain is Recombination protein RecR (198 aa).

A C4-type zinc finger spans residues 57-72 (CSICGNLTESDPCAIC). The Toprim domain occupies 80 to 175 (TTILVVEESK…KVTRLAHGLA (96 aa)).

Belongs to the RecR family.

Functionally, may play a role in DNA repair. It seems to be involved in an RecBC-independent recombinational process of DNA repair. It may act with RecF and RecO. This chain is Recombination protein RecR, found in Lactococcus lactis subsp. cremoris (strain SK11).